The primary structure comprises 802 residues: Leucine--tRNA ligase (802 aa).

The short motif at 40–51 (PYPSGAGLHVGH) is the 'HIGH' region element. A 'KMSKS' region motif is present at residues 576 to 580 (KMSKS). K579 is a binding site for ATP.

This sequence belongs to the class-I aminoacyl-tRNA synthetase family.

It localises to the cytoplasm. The catalysed reaction is tRNA(Leu) + L-leucine + ATP = L-leucyl-tRNA(Leu) + AMP + diphosphate. In Bacillus cereus (strain B4264), this protein is Leucine--tRNA ligase.